The following is a 332-amino-acid chain: MTNINRLSMSTMFNALHEILNEEPLAIPPPPSRGGYSYFHIRTTEMDLQRMFNFMTGSEDLKDDISVLDTGMLMWMASFLTSDSDYFMVITRNKNGSKSLQKLMRMSDDMDVFFFVAIMRLFIHVMIDKYASYVAIQGMRIFKQDKRELMYDHILRYALFLARDQYGCIALNEIIKELDDPYYRDELMDIVSNNALLLSNDAYGNFVVQHVLKLHDSRCTGNIADKLCGYCVELSFKKYGSYIVERLLEVRDIPMATIVLDLLACKTEMLIRLARSENGNFVVCKLLELTNDILTADLFYSLVNKLRPYRFLLHRFPESKIVAILGSMRVPN.

The region spanning 1-302 is the PUM-HD domain; sequence MTNINRLSMS…ILTADLFYSL (302 aa). A Pumilio 1 repeat occupies 82–117; sequence SDSDYFMVITRNKNGSKSLQKLMRMSDDMDVFFFVA. One copy of the Pumilio 2; degenerate repeat lies at 118 to 152; that stretch reads IMRLFIHVMIDKYASYVAIQGMRIFKQDKRELMYD. 4 Pumilio repeats span residues 153–188, 189–225, 226–264, and 265–300; these read HILRYALFLARDQYGCIALNEIIKELDDPYYRDELM, DIVSNNALLLSNDAYGNFVVQHVLKLHDSRCTGNIAD, KLCGYCVELSFKKYGSYIVERLLEVRDIPMATIVLDLLA, and CKTEMLIRLARSENGNFVVCKLLELTNDILTADLFY.

The protein localises to the cytoplasm. Its function is as follows. Sequence-specific RNA-binding protein that regulates translation and mRNA stability by binding the 3'-UTR of target mRNAs. This is Putative pumilio homolog 17 (APUM17) from Arabidopsis thaliana (Mouse-ear cress).